The chain runs to 184 residues: ATP synthase subunit b (184 aa).

A helical membrane pass occupies residues 24–44 (ILVVVVGFALLMFIVIKFIVP).

This sequence belongs to the ATPase B chain family. F-type ATPases have 2 components, F(1) - the catalytic core - and F(0) - the membrane proton channel. F(1) has five subunits: alpha(3), beta(3), gamma(1), delta(1), epsilon(1). F(0) has three main subunits: a(1), b(2) and c(10-14). The alpha and beta chains form an alternating ring which encloses part of the gamma chain. F(1) is attached to F(0) by a central stalk formed by the gamma and epsilon chains, while a peripheral stalk is formed by the delta and b chains.

It localises to the cell membrane. Functionally, f(1)F(0) ATP synthase produces ATP from ADP in the presence of a proton or sodium gradient. F-type ATPases consist of two structural domains, F(1) containing the extramembraneous catalytic core and F(0) containing the membrane proton channel, linked together by a central stalk and a peripheral stalk. During catalysis, ATP synthesis in the catalytic domain of F(1) is coupled via a rotary mechanism of the central stalk subunits to proton translocation. Its function is as follows. Component of the F(0) channel, it forms part of the peripheral stalk, linking F(1) to F(0). This is ATP synthase subunit b (atpF) from Micrococcus luteus (strain ATCC 4698 / DSM 20030 / JCM 1464 / CCM 169 / CCUG 5858 / IAM 1056 / NBRC 3333 / NCIMB 9278 / NCTC 2665 / VKM Ac-2230) (Micrococcus lysodeikticus).